The chain runs to 448 residues: Adenosylhomocysteinase (448 aa).

Substrate contacts are provided by threonine 61, aspartate 136, and glutamate 161. Threonine 162–alanine 164 lines the NAD(+) pocket. Positions 191 and 195 each coordinate substrate. NAD(+) contacts are provided by residues asparagine 196, glycine 225–glycine 230, glutamate 248, asparagine 283, isoleucine 304–histidine 306, and asparagine 360.

The protein belongs to the adenosylhomocysteinase family. The cofactor is NAD(+).

The protein localises to the cytoplasm. It carries out the reaction S-adenosyl-L-homocysteine + H2O = L-homocysteine + adenosine. The protein operates within amino-acid biosynthesis; L-homocysteine biosynthesis; L-homocysteine from S-adenosyl-L-homocysteine: step 1/1. Functionally, may play a key role in the regulation of the intracellular concentration of adenosylhomocysteine. In Rhodopirellula baltica (strain DSM 10527 / NCIMB 13988 / SH1), this protein is Adenosylhomocysteinase.